Consider the following 127-residue polypeptide: Holotricin-2 (127 aa).

Positions 1-15 are cleaved as a signal peptide; that stretch reads MMKLVIALCLIGISA. Positions 16–55 are excised as a propeptide; it reads AYVVPVYYEIYPEDATFDEADIEPQLSPAELHHGSIRERR. Residues 43-84 are disordered; the sequence is PAELHHGSIRERRSLQPGAPSFPMPGSQLPTSVSGNVEKQGR. A compositionally biased stretch (basic and acidic residues) spans 45–56; it reads ELHHGSIRERRS. Residues 70-84 show a composition bias toward polar residues; that stretch reads QLPTSVSGNVEKQGR.

This sequence belongs to the coleoptericin family. Hemolymph.

Its subcellular location is the secreted. Its function is as follows. Antibacterial activity against Gram-negative bacteria but not against Gram-positive bacteria. The chain is Holotricin-2 from Holotrichia diomphalia (Korean black chafer).